A 396-amino-acid chain; its full sequence is tRNA (guanine-N(7)-)-methyltransferase non-catalytic subunit wdr4 (396 aa).

WD repeat units follow at residues 52-91 (HGSD…EKIS), 94-133 (WVSR…EQGR), 137-178 (GHLS…MSFC), and 180-220 (GHTE…EVHS).

It belongs to the WD repeat TRM82 family. In terms of assembly, non-catalytic component of the METTL1-WDR4 complex, composed of mettl1 and wdr4.

Its subcellular location is the nucleus. It functions in the pathway tRNA modification; N(7)-methylguanine-tRNA biosynthesis. Functionally, non-catalytic component of the METTL1-WDR4 methyltransferase complex required for the formation of N(7)-methylguanine in a subset of RNA species, such as tRNAs, mRNAs and microRNAs (miRNAs). In the METTL1-WDR4 methyltransferase complex, wdr4 acts as a scaffold for tRNA-binding. Required for the formation of N(7)-methylguanine at position 46 (m7G46) in a large subset of tRNAs that contain the 5'-RAGGU-3' motif within the variable loop. M7G46 interacts with C13-G22 in the D-loop to stabilize tRNA tertiary structure and protect tRNAs from decay. Also required for the formation of N(7)-methylguanine at internal sites in a subset of mRNAs. Also required for methylation of a specific subset of miRNAs. This is tRNA (guanine-N(7)-)-methyltransferase non-catalytic subunit wdr4 (wdr4) from Xenopus laevis (African clawed frog).